Here is a 1272-residue protein sequence, read N- to C-terminus: Ubiquitin carboxyl-terminal hydrolase 2 (1272 aa).

The region spanning 736–1258 is the USP domain; sequence TGINNIGNTC…TPYFLVYVKQ (523 aa). Cysteine 745 functions as the Nucleophile in the catalytic mechanism. Residues 884-918 are disordered; it reads DGLNGDVGTDANRKKNESNDAEVSENEDTTGLTSP. The span at 902 to 911 shows a compositional bias: acidic residues; the sequence is NDAEVSENED. Serine 907 carries the phosphoserine modification. Catalysis depends on histidine 1209, which acts as the Proton acceptor.

The protein belongs to the peptidase C19 family. Forms a ternary complex with RSP5 and RUP1. Interacts with RSP5. Interacts with FZO1.

The catalysed reaction is Thiol-dependent hydrolysis of ester, thioester, amide, peptide and isopeptide bonds formed by the C-terminal Gly of ubiquitin (a 76-residue protein attached to proteins as an intracellular targeting signal).. Has an ATP-independent isopeptidase activity, cleaving at the C-terminus of the ubiquitin moiety in natural or engineered linear fusion proteins, irrespective of their size or the presence of an N-terminal extension to ubiquitin. Hydrolyzes polyubiquitinated 'Lys-63' polyubiquitin chains in RPO21, producing mono-ubiquitinated RNA polymerase II. Removes ubiquitin chains that initiate proteolysis of FZO1 and inhibit mitochondrial fusion. The protein is Ubiquitin carboxyl-terminal hydrolase 2 (UBP2) of Saccharomyces cerevisiae (strain ATCC 204508 / S288c) (Baker's yeast).